The chain runs to 258 residues: uncharacterized protein (258 aa).

An N-terminal signal peptide occupies residues 1–19; it reads MRKIFLPLLLVALSPVAHS.

This is an uncharacterized protein from Escherichia coli (strain K12).